Reading from the N-terminus, the 152-residue chain is Deoxyuridine 5'-triphosphate nucleotidohydrolase (152 aa).

Substrate contacts are provided by residues 62–64, Asn75, and 79–81; these read RSG and TVD.

The protein belongs to the dUTPase family. It depends on Mg(2+) as a cofactor.

It catalyses the reaction dUTP + H2O = dUMP + diphosphate + H(+). Its pathway is pyrimidine metabolism; dUMP biosynthesis; dUMP from dCTP (dUTP route): step 2/2. Functionally, this enzyme is involved in nucleotide metabolism: it produces dUMP, the immediate precursor of thymidine nucleotides and it decreases the intracellular concentration of dUTP so that uracil cannot be incorporated into DNA. The chain is Deoxyuridine 5'-triphosphate nucleotidohydrolase from Leifsonia xyli subsp. xyli (strain CTCB07).